We begin with the raw amino-acid sequence, 296 residues long: Vacuolar histidine transporter YPQ3 (296 aa).

Residues 1–12 (MKLIPIILNAKN) are Vacuolar-facing. One can recognise a PQ-loop 1 domain in the interval 10 to 76 (AKNLSGMAGS…QNLLPTMIIL (67 aa)). The chain crosses the membrane as a helical span at residues 13 to 33 (LSGMAGSISICCWIVVFVPQI). Topologically, residues 34-44 (YENFRRQSAEG) are cytoplasmic. A helical membrane pass occupies residues 45-65 (LSLLFIVLWLLGDIFNVMGAM). Topologically, residues 66 to 68 (MQN) are vacuolar. Residues 69 to 89 (LLPTMIILAAYYTLADLILLI) traverse the membrane as a helical segment. Over 90 to 163 (QCMWYDKEKK…RTIVVKEREN (74 aa)) the chain is Cytoplasmic. The helical transmembrane segment at 164-184 (FFNDFLIVSGVLIAGILSWYI) threads the bilayer. Over 185 to 199 (SYCSGLDNGIPKKKP) the chain is Vacuolar. A helical membrane pass occupies residues 200 to 220 (AFEQINLPAQILGYLSAILYL). The PQ-loop 2 domain occupies 208-270 (AQILGYLSAI…ASWLIGSAGT (63 aa)). Over 221–238 (GSRIPQIVLNFKRKSCEG) the chain is Cytoplasmic. A helical transmembrane segment spans residues 239–259 (VSFLFFLFACLGNTSFIISVL). The Vacuolar portion of the chain corresponds to 260 to 262 (SAS). Residues 263–283 (WLIGSAGTLLMDFTVFIQFFL) traverse the membrane as a helical segment. The Cytoplasmic portion of the chain corresponds to 284-296 (YAKPKYEKILIDN).

Belongs to the laat-1 family.

It localises to the vacuole membrane. It is found in the mitochondrion membrane. In terms of biological role, amino acid transporter that moves histidine into the vacuole. May also contribute to low affinity arginine import into the vacuole. May function as an amino acid/proton antiporter. The protein is Vacuolar histidine transporter YPQ3 of Saccharomyces cerevisiae (strain ATCC 204508 / S288c) (Baker's yeast).